We begin with the raw amino-acid sequence, 316 residues long: Pantothenate kinase (316 aa).

Position 95 to 102 (95 to 102) interacts with ATP; the sequence is GSVAVGKS.

It belongs to the prokaryotic pantothenate kinase family.

It localises to the cytoplasm. It carries out the reaction (R)-pantothenate + ATP = (R)-4'-phosphopantothenate + ADP + H(+). It functions in the pathway cofactor biosynthesis; coenzyme A biosynthesis; CoA from (R)-pantothenate: step 1/5. The sequence is that of Pantothenate kinase (coaA) from Halalkalibacterium halodurans (strain ATCC BAA-125 / DSM 18197 / FERM 7344 / JCM 9153 / C-125) (Bacillus halodurans).